The primary structure comprises 450 residues: 3-phosphoshikimate 1-carboxyvinyltransferase (450 aa).

3-phosphoshikimate contacts are provided by lysine 28, serine 29, and arginine 33. Lysine 28 serves as a coordination point for phosphoenolpyruvate. The phosphoenolpyruvate site is built by glycine 100 and arginine 128. 3-phosphoshikimate is bound by residues serine 173, glutamine 175, aspartate 326, and lysine 353. Glutamine 175 is a phosphoenolpyruvate binding site. Aspartate 326 serves as the catalytic Proton acceptor. Phosphoenolpyruvate-binding residues include arginine 357 and arginine 402.

Belongs to the EPSP synthase family. In terms of assembly, monomer.

The protein localises to the cytoplasm. It catalyses the reaction 3-phosphoshikimate + phosphoenolpyruvate = 5-O-(1-carboxyvinyl)-3-phosphoshikimate + phosphate. It functions in the pathway metabolic intermediate biosynthesis; chorismate biosynthesis; chorismate from D-erythrose 4-phosphate and phosphoenolpyruvate: step 6/7. Functionally, catalyzes the transfer of the enolpyruvyl moiety of phosphoenolpyruvate (PEP) to the 5-hydroxyl of shikimate-3-phosphate (S3P) to produce enolpyruvyl shikimate-3-phosphate and inorganic phosphate. The protein is 3-phosphoshikimate 1-carboxyvinyltransferase of Brucella abortus biovar 1 (strain 9-941).